A 264-amino-acid chain; its full sequence is Phosphonates import ATP-binding protein PhnC (264 aa).

Residues 8-255 form the ABC transporter domain; the sequence is LQAENLRMTF…KLIEIYGPEF (248 aa). 40–47 lines the ATP pocket; sequence GPSGSGKS.

The protein belongs to the ABC transporter superfamily. Phosphonates importer (TC 3.A.1.9.1) family. In terms of assembly, the complex is composed of two ATP-binding proteins (PhnC), two transmembrane proteins (PhnE) and a solute-binding protein (PhnD).

Its subcellular location is the cell inner membrane. The enzyme catalyses phosphonate(out) + ATP + H2O = phosphonate(in) + ADP + phosphate + H(+). Functionally, part of the ABC transporter complex PhnCDE involved in phosphonates import. Responsible for energy coupling to the transport system. This chain is Phosphonates import ATP-binding protein PhnC, found in Maricaulis maris (strain MCS10) (Caulobacter maris).